A 164-amino-acid polypeptide reads, in one-letter code: Cytochrome c oxidase subunit 4, mitochondrial (164 aa).

The N-terminal 33 residues, 1-33, are a transit peptide targeting the mitochondrion; that stretch reads MFMNSMLRVSRQRAAVRSTVSLYRGFVSASIRR. C120, H128, C143, and C146 together coordinate Zn(2+).

The protein belongs to the cytochrome c oxidase subunit 5B family. Component of the cytochrome c oxidase (complex IV, CIV), a multisubunit enzyme composed of a catalytic core of 3 subunits and several supernumerary subunits. The complex exists as a monomer or a dimer and forms supercomplexes (SCs) in the inner mitochondrial membrane with ubiquinol-cytochrome c oxidoreductase (cytochrome b-c1 complex, complex III, CIII).

Its subcellular location is the mitochondrion inner membrane. It functions in the pathway energy metabolism; oxidative phosphorylation. Its function is as follows. Component of the cytochrome c oxidase, the last enzyme in the mitochondrial electron transport chain which drives oxidative phosphorylation. The respiratory chain contains 3 multisubunit complexes succinate dehydrogenase (complex II, CII), ubiquinol-cytochrome c oxidoreductase (cytochrome b-c1 complex, complex III, CIII) and cytochrome c oxidase (complex IV, CIV), that cooperate to transfer electrons derived from NADH and succinate to molecular oxygen, creating an electrochemical gradient over the inner membrane that drives transmembrane transport and the ATP synthase. Cytochrome c oxidase is the component of the respiratory chain that catalyzes the reduction of oxygen to water. Electrons originating from reduced cytochrome c in the intermembrane space (IMS) are transferred via the dinuclear copper A center (CU(A)) of subunit 2 and heme A of subunit 1 to the active site in subunit 1, a binuclear center (BNC) formed by heme A3 and copper B (CU(B)). The BNC reduces molecular oxygen to 2 water molecules using 4 electrons from cytochrome c in the IMS and 4 protons from the mitochondrial matrix. This chain is Cytochrome c oxidase subunit 4, mitochondrial (cox4), found in Schizosaccharomyces pombe (strain 972 / ATCC 24843) (Fission yeast).